Reading from the N-terminus, the 148-residue chain is Ubiquitin-conjugating enzyme E2 29 (148 aa).

The UBC core domain occupies 1 to 147; it reads MATRRILKEL…ARSWTQKYAL (147 aa). The active-site Glycyl thioester intermediate is Cys-85.

Belongs to the ubiquitin-conjugating enzyme family.

It catalyses the reaction S-ubiquitinyl-[E1 ubiquitin-activating enzyme]-L-cysteine + [E2 ubiquitin-conjugating enzyme]-L-cysteine = [E1 ubiquitin-activating enzyme]-L-cysteine + S-ubiquitinyl-[E2 ubiquitin-conjugating enzyme]-L-cysteine.. It functions in the pathway protein modification; protein ubiquitination. Its function is as follows. Accepts the ubiquitin from the E1 complex and catalyzes its covalent attachment to other proteins. The polypeptide is Ubiquitin-conjugating enzyme E2 29 (UBC29) (Arabidopsis thaliana (Mouse-ear cress)).